Reading from the N-terminus, the 1679-residue chain is Lysophospholipase NTE1 (1679 aa).

Low complexity predominate over residues 1-20 (MRSMNCTTNNTNNTGQNTKN). Residues 1–21 (MRSMNCTTNNTNNTGQNTKNS) are disordered. Topologically, residues 1–49 (MRSMNCTTNNTNNTGQNTKNSLGSSFNSSNYTSYRFQTCLTDQIISEAQ) are cytoplasmic. A helical transmembrane segment spans residues 50-70 (TWSLSSLFNFSWVVSYFVMGA). Topologically, residues 71 to 103 (SRMIFRYGWYLATLSLLRIPKWIFFKLHHVQFT) are lumenal. The helical transmembrane segment at 104-124 (LSFWLILFALAVIVFVTYTIM) threads the bilayer. Topologically, residues 125–1679 (KERILSQYKR…EFLLHRRNSI (1555 aa)) are cytoplasmic. Residues 261–274 (SDKDHGDETDHSDT) are compositionally biased toward basic and acidic residues. The segment at 261-304 (SDKDHGDETDHSDTDGLDDQDRDEEDEEEDDDIDNYDTKSCSSN) is disordered. A compositionally biased stretch (acidic residues) spans 275-295 (DGLDDQDRDEEDEEEDDDIDN). 2 positions are modified to phosphoserine: Ser300 and Ser312. Disordered stretches follow at residues 498 to 527 (SSGS…KPSD) and 586 to 672 (DILS…VSPR). Composition is skewed to polar residues over residues 592–606 (PIHN…GINT) and 630–652 (FSSL…LDNT). A phosphoserine mark is found at Ser632, Ser634, Ser653, Ser661, Ser670, Ser680, and Ser739. A disordered region spans residues 775-800 (KEYTISNKRHNKSKSQDKKKPRAYKE). Over residues 788–800 (KSQDKKKPRAYKE) the composition is skewed to basic and acidic residues. Position 803 is a phosphothreonine (Thr803). Residues 803–947 (TPNL…LTKL) and 943–1074 (SLTK…VAKK) contribute to the a nucleoside 3',5'-cyclic phosphate site. The disordered stretch occupies residues 855 to 882 (SSSVVSSMSKPEQVSAQSSHKGENPHHT). Positions 862–873 (MSKPEQVSAQSS) are enriched in polar residues. Residues 1373-1537 (LVLGGGGARG…VDNLPVTEMR (165 aa)) enclose the PNPLA domain. A GXGXXG motif is present at residues 1377–1382 (GGGARG). Positions 1404–1408 (GTSIG) match the GXSXG motif. The active-site Nucleophile is Ser1406. Catalysis depends on Asp1524, which acts as the Proton acceptor. The short motif at 1524 to 1526 (DGG) is the DGA/G element.

The protein belongs to the NTE family.

The protein localises to the endoplasmic reticulum membrane. It localises to the lipid droplet. The enzyme catalyses a 1-acyl-sn-glycero-3-phosphocholine + H2O = sn-glycerol 3-phosphocholine + a fatty acid + H(+). The catalysed reaction is a 1,2-diacyl-sn-glycero-3-phosphocholine + 2 H2O = sn-glycerol 3-phosphocholine + 2 a carboxylate + 2 H(+). Its activity is regulated as follows. Positively regulated by SEC14. Inhibited by organophosphorus esters in the order phenyl saligenin phosphate (PSP) &gt; phenyldipentyl phosphinate (PDPP) = diisopropyl fluorophosphate (DFP) &gt; and paraoxon (PXN). Functionally, intracellular phospholipase B that catalyzes the double deacylation of phosphatidylcholine (PC) to glycerophosphocholine (GroPCho). Plays an important role in membrane lipid homeostasis. Responsible for the rapid PC turnover in response to inositol, elevated temperatures, or when choline is present in the growth medium. NTE1 activity impacts the repressing transcriptional activity of OPI1, the main regulator of phospholipid synthesis gene transcription. In Saccharomyces cerevisiae (strain ATCC 204508 / S288c) (Baker's yeast), this protein is Lysophospholipase NTE1 (NTE1).